The sequence spans 675 residues: Gastrula zinc finger protein xFG20-1 (675 aa).

10 C2H2-type zinc fingers span residues 62-84 (FTCT…IRAH), 90-112 (FSCM…YSVH), 118-140 (FSCT…LRVH), 146-168 (YSCE…QRTH), 174-196 (FSCT…LKTH), 202-224 (HLCA…QKIH), 257-279 (FPCT…QSTH), 286-308 (FPCT…QSTH), 344-366 (LPCT…QSTH), and 373-395 (LPCT…QSTH). The segment at 302-325 (RTHQSTHTEGQKSLPSTESGGTFS) is disordered. Residues 304 to 325 (HQSTHTEGQKSLPSTESGGTFS) are compositionally biased toward polar residues. The segment covering 390-407 (THQSTHTSPSTEFGVQTT) has biased composition (polar residues). Residues 390–423 (THQSTHTSPSTEFGVQTTEDNHQSPSKDHTGEKP) are disordered. Positions 408-421 (EDNHQSPSKDHTGE) are enriched in basic and acidic residues. 8 C2H2-type zinc fingers span residues 424–446 (FSCS…LVVH), 452–474 (YHCI…QRTH), 480–501 (FSCN…YRVH), 507–529 (YPCT…YKVH), 535–557 (YPCQ…LRTH), 563–585 (FSCT…LTTH), 591–613 (FSCT…YKMH), and 619–642 (FTCT…TTVH).

Belongs to the krueppel C2H2-type zinc-finger protein family.

It localises to the nucleus. Its function is as follows. May be involved in transcriptional regulation. This chain is Gastrula zinc finger protein xFG20-1, found in Xenopus laevis (African clawed frog).